The primary structure comprises 351 residues: L-threonine 3-dehydrogenase (351 aa).

Residue cysteine 39 coordinates Zn(2+). Residues threonine 41 and histidine 44 each act as charge relay system in the active site. Zn(2+) is bound by residues histidine 64, glutamate 65, cysteine 94, cysteine 97, cysteine 100, and cysteine 108. NAD(+) is bound by residues isoleucine 176, aspartate 196, arginine 201, 271–273 (LGI), and 295–296 (IY).

The protein belongs to the zinc-containing alcohol dehydrogenase family. In terms of assembly, homotetramer. Zn(2+) is required as a cofactor.

The protein resides in the cytoplasm. The catalysed reaction is L-threonine + NAD(+) = (2S)-2-amino-3-oxobutanoate + NADH + H(+). It participates in amino-acid degradation; L-threonine degradation via oxydo-reductase pathway; glycine from L-threonine: step 1/2. Its function is as follows. Catalyzes the NAD(+)-dependent oxidation of L-threonine to 2-amino-3-ketobutyrate. The protein is L-threonine 3-dehydrogenase of Francisella tularensis subsp. novicida (strain U112).